The primary structure comprises 319 residues: 4-hydroxy-3-methylbut-2-enyl diphosphate reductase (319 aa).

Cysteine 12 is a binding site for [4Fe-4S] cluster. 2 residues coordinate (2E)-4-hydroxy-3-methylbut-2-enyl diphosphate: histidine 41 and histidine 74. Residues histidine 41 and histidine 74 each contribute to the dimethylallyl diphosphate site. Residues histidine 41 and histidine 74 each contribute to the isopentenyl diphosphate site. Cysteine 97 lines the [4Fe-4S] cluster pocket. Histidine 125 serves as a coordination point for (2E)-4-hydroxy-3-methylbut-2-enyl diphosphate. Histidine 125 lines the dimethylallyl diphosphate pocket. Histidine 125 contacts isopentenyl diphosphate. Residue glutamate 127 is the Proton donor of the active site. Threonine 168 is a binding site for (2E)-4-hydroxy-3-methylbut-2-enyl diphosphate. Cysteine 198 serves as a coordination point for [4Fe-4S] cluster. (2E)-4-hydroxy-3-methylbut-2-enyl diphosphate-binding residues include serine 226, serine 227, asparagine 228, and serine 270. 4 residues coordinate dimethylallyl diphosphate: serine 226, serine 227, asparagine 228, and serine 270. Isopentenyl diphosphate is bound by residues serine 226, serine 227, asparagine 228, and serine 270.

It belongs to the IspH family. As to quaternary structure, homodimer. Requires [4Fe-4S] cluster as cofactor.

It catalyses the reaction isopentenyl diphosphate + 2 oxidized [2Fe-2S]-[ferredoxin] + H2O = (2E)-4-hydroxy-3-methylbut-2-enyl diphosphate + 2 reduced [2Fe-2S]-[ferredoxin] + 2 H(+). It carries out the reaction dimethylallyl diphosphate + 2 oxidized [2Fe-2S]-[ferredoxin] + H2O = (2E)-4-hydroxy-3-methylbut-2-enyl diphosphate + 2 reduced [2Fe-2S]-[ferredoxin] + 2 H(+). It functions in the pathway isoprenoid biosynthesis; dimethylallyl diphosphate biosynthesis; dimethylallyl diphosphate from (2E)-4-hydroxy-3-methylbutenyl diphosphate: step 1/1. The protein operates within isoprenoid biosynthesis; isopentenyl diphosphate biosynthesis via DXP pathway; isopentenyl diphosphate from 1-deoxy-D-xylulose 5-phosphate: step 6/6. Functionally, catalyzes the conversion of 1-hydroxy-2-methyl-2-(E)-butenyl 4-diphosphate (HMBPP) into a mixture of isopentenyl diphosphate (IPP) and dimethylallyl diphosphate (DMAPP). Acts in the terminal step of the DOXP/MEP pathway for isoprenoid precursor biosynthesis. The protein is 4-hydroxy-3-methylbut-2-enyl diphosphate reductase of Hamiltonella defensa subsp. Acyrthosiphon pisum (strain 5AT).